The primary structure comprises 467 residues: Fumarate hydratase class II (467 aa).

Substrate is bound by residues 99–101, 130–133, 140–142, and threonine 188; these read SGT, HPND, and SSN. The Proton donor/acceptor role is filled by histidine 189. Residue serine 319 is part of the active site. Substrate contacts are provided by residues serine 320 and 325–327; that span reads KVN.

It belongs to the class-II fumarase/aspartase family. Fumarase subfamily. Homotetramer.

The protein localises to the cytoplasm. The catalysed reaction is (S)-malate = fumarate + H2O. The protein operates within carbohydrate metabolism; tricarboxylic acid cycle; (S)-malate from fumarate: step 1/1. In terms of biological role, involved in the TCA cycle. Catalyzes the stereospecific interconversion of fumarate to L-malate. The protein is Fumarate hydratase class II of Thermosynechococcus vestitus (strain NIES-2133 / IAM M-273 / BP-1).